Reading from the N-terminus, the 701-residue chain is DUF724 domain-containing protein 6 (701 aa).

Disordered regions lie at residues 299 to 353 and 374 to 452; these read MKTK…KRAN and VEPV…DESC. Residues 326–340 are compositionally biased toward basic and acidic residues; it reads LNLEKSAETLTKAES. Over residues 381–399 the composition is skewed to polar residues; the sequence is RVRTATPLKQTKADTQGKS. Composition is skewed to basic and acidic residues over residues 403-412, 421-430, and 437-449; these read KTLEPMRDEN, KVLEEKNSEK, and RQEE…KETD. Residues 514 to 700 form the DUF724 domain; the sequence is LPFAKKSPFW…LEFQSTASAP (187 aa). Residues 626–670 are a coiled coil; it reads LEKKIEAGEIEGHTYEEEMAELELKILELKRQQVVAKEMKEATDK.

In terms of tissue distribution, expressed in roots, stems and flowers.

It is found in the nucleus. May be involved in the polar growth of plant cells via transportation of RNAs. This chain is DUF724 domain-containing protein 6, found in Arabidopsis thaliana (Mouse-ear cress).